The chain runs to 510 residues: Histidine ammonia-lyase (510 aa).

The 5-imidazolinone (Ala-Gly) cross-link spans 143–145 (ASG). Ser-144 is modified (2,3-didehydroalanine (Ser)).

It belongs to the PAL/histidase family. Contains an active site 4-methylidene-imidazol-5-one (MIO), which is formed autocatalytically by cyclization and dehydration of residues Ala-Ser-Gly.

It is found in the cytoplasm. It carries out the reaction L-histidine = trans-urocanate + NH4(+). It participates in amino-acid degradation; L-histidine degradation into L-glutamate; N-formimidoyl-L-glutamate from L-histidine: step 1/3. In Aliivibrio fischeri (strain MJ11) (Vibrio fischeri), this protein is Histidine ammonia-lyase.